Consider the following 193-residue polypeptide: tRNA(Phe) 7-((3-amino-3-carboxypropyl)-4-demethylwyosine(37)-N(4))-methyltransferase (193 aa).

Belongs to the TYW3 family.

The enzyme catalyses 4-demethyl-7-[(3S)-3-amino-3-carboxypropyl]wyosine(37) in tRNA(Phe) + S-adenosyl-L-methionine = 7-[(3S)-3-amino-3-carboxypropyl]wyosine(37) in tRNA(Phe) + S-adenosyl-L-homocysteine + H(+). Its function is as follows. S-adenosyl-L-methionine-dependent methyltransferase that acts as a component of the wyosine derivatives biosynthesis pathway. Probably methylates N-4 position of wybutosine-86 to produce wybutosine-72. This Methanocaldococcus jannaschii (strain ATCC 43067 / DSM 2661 / JAL-1 / JCM 10045 / NBRC 100440) (Methanococcus jannaschii) protein is tRNA(Phe) 7-((3-amino-3-carboxypropyl)-4-demethylwyosine(37)-N(4))-methyltransferase.